The sequence spans 464 residues: MSLQLLRNTRIFVSTVKTGHNKTNTQEILVQDDISWGQDSNSTDITVNEAGPRPTRGSKRFNDSLNAAEWSFSTYILPYKDKNTSKQIVPDYMLWHALSSGRAINLEGTTGAHNNATNFMVNFKDNSYHELAMLHIYILTDKTWSYIDSCQINQAEVNVDIEDIGRVTWSGNGNQLIPLDEQPFDPDQIGIDDETYMTIQGSYIKNKLTILKIKDMDTNKSYDIPITGGTFTINNNITYLTPNVMSRVTIPIGSFTGAFELTGSLTAYLNDKSLGSMELYKDLIKTLKVVNRFEIALVLGGEYDDERPAAILVAKQAHVNIPTIETDDVLGTSVEFKAIPSDLDAGDEGYLGFSSKYTRTTINNLIVNGDGATDAVTAITVKSAGNVTTLNRSATLQMSVEVTPSSARNKEVTWAITAGDAATINATGLLRADASKTGAVTVEATAKDGSGVKGTKVITVTAGG.

Positions 40 to 59 (SNSTDITVNEAGPRPTRGSK) are disordered. The region spanning 375 to 453 (AVTAITVKSA…ATAKDGSGVK (79 aa)) is the BIG2 domain.

Homotrimer. The tail tube is made of 40 stacked trimeric rings. Interacts with baseplate tube protein p140.

It localises to the virion. Its function is as follows. Polymerizes to form the tail tube of the phage. Tail tube protein polymerization takes place around the tape measure protein (TMP-pb2) and is probably directed by chaperone proteins. The tail tube is involved in viral genome delivery during ejection. This Escherichia coli (Enterobacteria phage T5) protein is Tail tube protein pb6.